Consider the following 314-residue polypeptide: Cytochrome f (314 aa).

An N-terminal signal peptide occupies residues methionine 1 to alanine 29. Residues tyrosine 30, cysteine 50, cysteine 53, and histidine 54 each contribute to the heme site. Residues valine 280 to lysine 300 form a helical membrane-spanning segment.

Belongs to the cytochrome f family. In terms of assembly, the 4 large subunits of the cytochrome b6-f complex are cytochrome b6, subunit IV (17 kDa polypeptide, petD), cytochrome f and the Rieske protein, while the 4 small subunits are PetG, PetL, PetM and PetN. The complex functions as a dimer. Heme is required as a cofactor.

Its subcellular location is the plastid. The protein localises to the chloroplast thylakoid membrane. Its function is as follows. Component of the cytochrome b6-f complex, which mediates electron transfer between photosystem II (PSII) and photosystem I (PSI), cyclic electron flow around PSI, and state transitions. This chain is Cytochrome f, found in Illicium oligandrum (Star anise).